Consider the following 258-residue polypeptide: Acyl-[acyl-carrier-protein]--UDP-N-acetylglucosamine O-acyltransferase (258 aa).

The protein belongs to the transferase hexapeptide repeat family. LpxA subfamily. Homotrimer.

The protein localises to the cytoplasm. It catalyses the reaction a (3R)-hydroxyacyl-[ACP] + UDP-N-acetyl-alpha-D-glucosamine = a UDP-3-O-[(3R)-3-hydroxyacyl]-N-acetyl-alpha-D-glucosamine + holo-[ACP]. It functions in the pathway glycolipid biosynthesis; lipid IV(A) biosynthesis; lipid IV(A) from (3R)-3-hydroxytetradecanoyl-[acyl-carrier-protein] and UDP-N-acetyl-alpha-D-glucosamine: step 1/6. Involved in the biosynthesis of lipid A, a phosphorylated glycolipid that anchors the lipopolysaccharide to the outer membrane of the cell. The chain is Acyl-[acyl-carrier-protein]--UDP-N-acetylglucosamine O-acyltransferase from Alkalilimnicola ehrlichii (strain ATCC BAA-1101 / DSM 17681 / MLHE-1).